Consider the following 276-residue polypeptide: Dermonecrotic toxin LlSicTox-alphaIV1ii (276 aa).

The active site involves His5. Glu25 and Asp27 together coordinate Mg(2+). His41 functions as the Nucleophile in the catalytic mechanism. Cystine bridges form between Cys45–Cys51 and Cys47–Cys193. Asp85 provides a ligand contact to Mg(2+).

This sequence belongs to the arthropod phospholipase D family. Class II subfamily. Requires Mg(2+) as cofactor. As to expression, expressed by the venom gland.

The protein resides in the secreted. The catalysed reaction is an N-(acyl)-sphingosylphosphocholine = an N-(acyl)-sphingosyl-1,3-cyclic phosphate + choline. It catalyses the reaction an N-(acyl)-sphingosylphosphoethanolamine = an N-(acyl)-sphingosyl-1,3-cyclic phosphate + ethanolamine. The enzyme catalyses a 1-acyl-sn-glycero-3-phosphocholine = a 1-acyl-sn-glycero-2,3-cyclic phosphate + choline. It carries out the reaction a 1-acyl-sn-glycero-3-phosphoethanolamine = a 1-acyl-sn-glycero-2,3-cyclic phosphate + ethanolamine. Functionally, dermonecrotic toxins cleave the phosphodiester linkage between the phosphate and headgroup of certain phospholipids (sphingolipid and lysolipid substrates), forming an alcohol (often choline) and a cyclic phosphate. This toxin acts on sphingomyelin (SM). It may also act on ceramide phosphoethanolamine (CPE), lysophosphatidylcholine (LPC) and lysophosphatidylethanolamine (LPE), but not on lysophosphatidylserine (LPS), and lysophosphatidylglycerol (LPG). It acts by transphosphatidylation, releasing exclusively cyclic phosphate products as second products. Induces dermonecrosis, hemolysis, increased vascular permeability, edema, inflammatory response, and platelet aggregation. The protein is Dermonecrotic toxin LlSicTox-alphaIV1ii of Loxosceles laeta (South American recluse spider).